Here is a 62-residue protein sequence, read N- to C-terminus: MEGIAKITLILLFLFVTMHTFANWNTEAAVCVYRTCDKDCKRRGYRSGKCINNACKCYPYGK.

Positions Met-1–Ala-22 are cleaved as a signal peptide. Residues Asn-23–Ala-28 constitute a propeptide that is removed on maturation. 3 cysteine pairs are disulfide-bonded: Cys-31-Cys-50, Cys-36-Cys-55, and Cys-40-Cys-57. At Tyr-60 the chain carries Tyrosine amide.

This sequence belongs to the short scorpion toxin superfamily. Potassium channel inhibitor family. Alpha-KTx 10 subfamily. In terms of tissue distribution, expressed by the venom gland.

It localises to the secreted. Its function is as follows. Blocks Shaker B (Sh) and voltage-gated potassium-channels Kv1.1/KCNA1, Kv1.2/KCNA2, Kv1.3/KCNA3. Also inhibits small conductance calcium-activated potassium channels (KCNN) and intermediate conductance calcium-activated potassium channel (KCa3.1/KCNN4). This chain is Potassium channel toxin alpha-KTx 10.1, found in Centruroides noxius (Mexican scorpion).